Here is a 236-residue protein sequence, read N- to C-terminus: Large ribosomal subunit protein uL3 (236 aa).

Residues Pro-215 to Ala-236 are disordered. Positions Ala-221 to Ala-236 are enriched in low complexity.

This sequence belongs to the universal ribosomal protein uL3 family. As to quaternary structure, part of the 50S ribosomal subunit. Forms a cluster with proteins L14 and L19.

Its function is as follows. One of the primary rRNA binding proteins, it binds directly near the 3'-end of the 23S rRNA, where it nucleates assembly of the 50S subunit. The polypeptide is Large ribosomal subunit protein uL3 (Parafrankia sp. (strain EAN1pec)).